The primary structure comprises 206 residues: Small ribosomal subunit protein uS4 (206 aa).

The S4 RNA-binding domain occupies 96–156 (GRLDNVVYRM…EKAKKQSRVK (61 aa)).

The protein belongs to the universal ribosomal protein uS4 family. In terms of assembly, part of the 30S ribosomal subunit. Contacts protein S5. The interaction surface between S4 and S5 is involved in control of translational fidelity.

In terms of biological role, one of the primary rRNA binding proteins, it binds directly to 16S rRNA where it nucleates assembly of the body of the 30S subunit. Functionally, with S5 and S12 plays an important role in translational accuracy. The chain is Small ribosomal subunit protein uS4 from Serratia proteamaculans (strain 568).